The primary structure comprises 130 residues: Small ribosomal subunit protein uS9 (130 aa).

The protein belongs to the universal ribosomal protein uS9 family.

This Bacillus mycoides (strain KBAB4) (Bacillus weihenstephanensis) protein is Small ribosomal subunit protein uS9.